The primary structure comprises 196 residues: FKBP-type peptidyl-prolyl cis-trans isomerase SlyD (196 aa).

Residues 1 to 69 (MKVAKDLVVS…VAVGANDAYG (69 aa)) are PPIase first part. The PPIase FKBP-type domain maps to 1–95 (MKVAKDLVVS…GVDELQVGMR (95 aa)). The segment at 76–120 (VQRVPKDVFMGVDELQVGMRFLAETDQGPVPVEITAVEDDHVVVD) is IF-chaperone. A PPIase second part region spans residues 129 to 151 (NLKFNVEVVAIREATEEELAHGH). 6 residues coordinate Ni(2+): C167, C168, C184, C185, C193, and C195.

It belongs to the FKBP-type PPIase family. Monomer. Binds to a broad range of unrelated Tat signal sequences. Interacts with the hydrogenase nickel incorporation protein HypB.

It is found in the cytoplasm. It carries out the reaction [protein]-peptidylproline (omega=180) = [protein]-peptidylproline (omega=0). Functionally, folding helper with both chaperone and peptidyl-prolyl cis-trans isomerase (PPIase) activities. Chaperone activity prevents aggregation of unfolded or partially folded proteins and promotes their correct folding. PPIases catalyze the cis-trans isomerization of Xaa-Pro bonds of peptides, which accelerates slow steps of protein folding and thus shortens the lifetime of intermediates. Both strategies lower the concentration of intermediates and increase the productivity and yield of the folding reaction. SlyD could be involved in Tat-dependent translocation, by binding to the Tat-type signal of folded proteins. Also involved in hydrogenase metallocenter assembly, probably by participating in the nickel insertion step. This function in hydrogenase biosynthesis requires chaperone activity and the presence of the metal-binding domain, but not PPIase activity. The polypeptide is FKBP-type peptidyl-prolyl cis-trans isomerase SlyD (slyD) (Escherichia coli O157:H7).